The following is a 622-amino-acid chain: Palmitoyltransferase pfa3 (622 aa).

Residues 1 to 38 (MDATPYTTSSTSTALDSPSSLSATMARRWARKLERYCC) lie on the Cytoplasmic side of the membrane. A helical membrane pass occupies residues 39–59 (TCVTYFPLAFVYSMTSWAAYV). Over 60–76 (DVSLSTTPSRVTWLGHS) the chain is Vacuolar. Residues 77–97 (YGFIAVVLYLLANWCYTYAVF) form a helical membrane-spanning segment. The Cytoplasmic segment spans residues 98–175 (TSPGSTTNEY…ATCVGLRNHK (78 aa)). Residues 132 to 182 (RFCKKCQARKPDRAHHCSTCRRCVLKMDHHCPWLATCVGLRNHKAFLLFLI) enclose the DHHC domain. Residues 176-196 (AFLLFLIYTSVFCWVSFAGSA) traverse the membrane as a helical segment. Residues 197 to 217 (SWVWEEIMSNTTYVETLMPVN) are Vacuolar-facing. A helical transmembrane segment spans residues 218 to 238 (YIMLSVISGIIGIVLSAFCGW). The Cytoplasmic portion of the chain corresponds to 239–622 (HIYLASRGQT…EGRSNDDGVD (384 aa)). Disordered regions lie at residues 298–334 (PGVTRPEEGEEMRRMTTPSGSSQRNDLASQHNPELQA), 419–507 (REEQ…YADD), and 533–622 (DDVL…DGVD). Over residues 302-311 (RPEEGEEMRR) the composition is skewed to basic and acidic residues. Over residues 313–330 (TTPSGSSQRNDLASQHNP) the composition is skewed to polar residues. The span at 419–428 (REEQRQRERQ) shows a compositional bias: basic and acidic residues. Residues 443-455 (YTPTWTPPNQQHP) show a composition bias toward polar residues. A compositionally biased stretch (low complexity) spans 466 to 488 (PSSQPQTQRNSNSSSPSFTPSRR). A compositionally biased stretch (acidic residues) spans 533 to 547 (DDVLNDDDDDDEDYF). Over residues 610 to 622 (NGEEGRSNDDGVD) the composition is skewed to basic and acidic residues.

The protein belongs to the DHHC palmitoyltransferase family. PFA3 subfamily. Post-translationally, autopalmitoylated.

The protein resides in the vacuole membrane. It catalyses the reaction L-cysteinyl-[protein] + hexadecanoyl-CoA = S-hexadecanoyl-L-cysteinyl-[protein] + CoA. In terms of biological role, palmitoyltransferase specific for vac8. Palmitoylates vac8 at one or more of its N-terminal cysteine residues, which is required for its proper membrane localization. The protein is Palmitoyltransferase pfa3 (ptr-3) of Neurospora crassa (strain ATCC 24698 / 74-OR23-1A / CBS 708.71 / DSM 1257 / FGSC 987).